We begin with the raw amino-acid sequence, 531 residues long: Importin subunit alpha-3 (531 aa).

The region spanning M1–S58 is the IBB domain. 8 ARM repeats span residues I111–N153, T154–L198, V199–P236, P237–Q281, A282–Q321, T322–Q364, I365–H405, and D406–E447. The tract at residues D500–P524 is disordered. The segment covering A511 to P524 has biased composition (polar residues).

The protein belongs to the importin alpha family. As to quaternary structure, forms a complex with importin subunit beta-1. Interacts with PRL1. Interacts with A.tumefaciens VirD2 and VirE2.

The protein localises to the nucleus. In terms of biological role, binds to conventional NLS motifs and mediates nuclear protein import across the nuclear envelope. Acts as a cellular receptor for the nuclear import of the virD2 protein of Agrobacterium, but is not essential for Agrobacterium-mediated root transformation. May be involved in the regulation of pathogen-induced salicylic acid accumulation. This Arabidopsis thaliana (Mouse-ear cress) protein is Importin subunit alpha-3.